Reading from the N-terminus, the 460-residue chain is ATP synthase subunit beta (460 aa).

150 to 157 (GGAGVGKT) contacts ATP.

It belongs to the ATPase alpha/beta chains family. F-type ATPases have 2 components, CF(1) - the catalytic core - and CF(0) - the membrane proton channel. CF(1) has five subunits: alpha(3), beta(3), gamma(1), delta(1), epsilon(1). CF(0) has three main subunits: a(1), b(2) and c(9-12). The alpha and beta chains form an alternating ring which encloses part of the gamma chain. CF(1) is attached to CF(0) by a central stalk formed by the gamma and epsilon chains, while a peripheral stalk is formed by the delta and b chains.

It localises to the cell inner membrane. The catalysed reaction is ATP + H2O + 4 H(+)(in) = ADP + phosphate + 5 H(+)(out). In terms of biological role, produces ATP from ADP in the presence of a proton gradient across the membrane. The catalytic sites are hosted primarily by the beta subunits. The chain is ATP synthase subunit beta from Salmonella agona (strain SL483).